The sequence spans 231 residues: Large ribosomal subunit protein uL1 (231 aa).

Belongs to the universal ribosomal protein uL1 family. In terms of assembly, part of the 50S ribosomal subunit.

Its function is as follows. Binds directly to 23S rRNA. The L1 stalk is quite mobile in the ribosome, and is involved in E site tRNA release. Functionally, protein L1 is also a translational repressor protein, it controls the translation of the L11 operon by binding to its mRNA. This chain is Large ribosomal subunit protein uL1, found in Halalkalibacterium halodurans (strain ATCC BAA-125 / DSM 18197 / FERM 7344 / JCM 9153 / C-125) (Bacillus halodurans).